Here is a 244-residue protein sequence, read N- to C-terminus: ATP synthase subunit a (244 aa).

Helical transmembrane passes span 20-40 (FFDISITTITVYLGLLMVIVI), 81-101 (GILFFPFIMSLFLFVLTLNVM), 113-133 (QLLVTFTLAITIMIGITIWGF), 140-160 (FLNIFVPSGIEPWLLPLLVFI), 176-196 (LFANMLAGHLLIHIIGVAAIY), 202-222 (FIGILPWICVIAFMFLELGIA), and 223-243 (FLQAYVFVLLTLIYIANIINL).

It belongs to the ATPase A chain family. As to quaternary structure, F-type ATPases have 2 components, CF(1) - the catalytic core - and CF(0) - the membrane proton channel. CF(1) has five subunits: alpha(3), beta(3), gamma(1), delta(1), epsilon(1). CF(0) has three main subunits: a, b and c.

It is found in the mitochondrion inner membrane. Its function is as follows. Mitochondrial membrane ATP synthase (F(1)F(0) ATP synthase or Complex V) produces ATP from ADP in the presence of a proton gradient across the membrane which is generated by electron transport complexes of the respiratory chain. F-type ATPases consist of two structural domains, F(1) - containing the extramembraneous catalytic core and F(0) - containing the membrane proton channel, linked together by a central stalk and a peripheral stalk. During catalysis, ATP synthesis in the catalytic domain of F(1) is coupled via a rotary mechanism of the central stalk subunits to proton translocation. Key component of the proton channel; it may play a direct role in the translocation of protons across the membrane. In Dictyostelium discoideum (Social amoeba), this protein is ATP synthase subunit a (atp6).